The following is a 329-amino-acid chain: Probable tyrosine--tRNA ligase, cytoplasmic (329 aa).

Tyr-35 serves as a coordination point for L-tyrosine. Positions 40–48 match the 'HIGH' region motif; that stretch reads TTGKPHIAY. L-tyrosine is bound by residues Tyr-162, Gln-166, Asp-169, and Gln-184. A 'KMSKS' region motif is present at residues 218-222; the sequence is KMSSS.

This sequence belongs to the class-I aminoacyl-tRNA synthetase family. In terms of assembly, homodimer.

Its subcellular location is the cytoplasm. It catalyses the reaction tRNA(Tyr) + L-tyrosine + ATP = L-tyrosyl-tRNA(Tyr) + AMP + diphosphate + H(+). The chain is Probable tyrosine--tRNA ligase, cytoplasmic from Vairimorpha ceranae (strain BRL01) (Microsporidian parasite).